A 380-amino-acid polypeptide reads, in one-letter code: Lipid-A-disaccharide synthase (380 aa).

This sequence belongs to the LpxB family.

It catalyses the reaction a lipid X + a UDP-2-N,3-O-bis[(3R)-3-hydroxyacyl]-alpha-D-glucosamine = a lipid A disaccharide + UDP + H(+). It participates in bacterial outer membrane biogenesis; LPS lipid A biosynthesis. Functionally, condensation of UDP-2,3-diacylglucosamine and 2,3-diacylglucosamine-1-phosphate to form lipid A disaccharide, a precursor of lipid A, a phosphorylated glycolipid that anchors the lipopolysaccharide to the outer membrane of the cell. This chain is Lipid-A-disaccharide synthase, found in Azotobacter vinelandii (strain DJ / ATCC BAA-1303).